The sequence spans 110 residues: SOSS complex subunit C (110 aa).

This sequence belongs to the SOSS-C family. In terms of assembly, belongs to the multiprotein complex Integrator. Component of the SOSS complex, composed of soss-b (soss-b1/nabp2 or soss-b2/nabp1), soss-a/ints3 and soss-c/inip.

It is found in the nucleus. Functionally, component of the SOSS complex, a multiprotein complex that functions downstream of the MRN complex to promote DNA repair and G2/M checkpoint. The SOSS complex associates with single-stranded DNA at DNA lesions and influences diverse endpoints in the cellular DNA damage response including cell-cycle checkpoint activation, recombinational repair and maintenance of genomic stability. Required for efficient homologous recombination-dependent repair of double-strand breaks (DSBs). The chain is SOSS complex subunit C (inip) from Xenopus laevis (African clawed frog).